The following is a 270-amino-acid chain: UPF0162 protein PA3419 (270 aa).

This sequence belongs to the UPF0162 family.

This Pseudomonas aeruginosa (strain ATCC 15692 / DSM 22644 / CIP 104116 / JCM 14847 / LMG 12228 / 1C / PRS 101 / PAO1) protein is UPF0162 protein PA3419.